Here is a 359-residue protein sequence, read N- to C-terminus: CMP-N-acetylneuraminate-poly-alpha-2,8-sialyltransferase (359 aa).

Topologically, residues 1 to 7 (MRSIRKR) are cytoplasmic. A helical; Signal-anchor for type II membrane protein membrane pass occupies residues 8 to 20 (WTICTISLLLIFY). The Lumenal portion of the chain corresponds to 21–359 (KTKEMARTEE…KLTTGKCIKQ (339 aa)). N-linked (GlcNAc...) asparagine glycans are attached at residues Asn-50, Asn-74, and Asn-119. 2 cysteine pairs are disulfide-bonded: Cys-142–Cys-292 and Cys-156–Cys-356. Positions 147 and 170 each coordinate CMP-N-acetyl-beta-neuraminate. 2 N-linked (GlcNAc...) asparagine glycosylation sites follow: Asn-204 and Asn-219. CMP-N-acetyl-beta-neuraminate contacts are provided by Ser-279, Thr-280, Gly-281, and Trp-301. The Proton donor/acceptor role is filled by His-331.

Belongs to the glycosyltransferase 29 family. Autopolysialylated.

The protein resides in the golgi apparatus membrane. It localises to the secreted. The enzyme catalyses [N-acetyl-alpha-D-neuraminosyl-(2-&gt;8)](n) + CMP-N-acetyl-beta-neuraminate = [N-acetyl-alpha-D-neuraminosyl-(2-&gt;8)](n+1) + CMP + H(+). Functionally, catalyzes the transfer of a sialic acid from a CMP-linked sialic acid donor onto a terminal alpha-2,3-, alpha-2,6-, or alpha-2,8-linked sialic acid of an N-linked glycan protein acceptor through alpha-2,8-linkages. Therefore, participates in polysialic acid synthesis on various sialylated N-acetyllactosaminyl oligosaccharides, including NCAM1 N-glycans, FETUB N-glycans and AHSG. It is noteworthy that alpha-2,3-linked sialic acid is apparently a better acceptor than alpha-2,6-linked sialic acid. The chain is CMP-N-acetylneuraminate-poly-alpha-2,8-sialyltransferase (ST8SIA4) from Bos taurus (Bovine).